Consider the following 130-residue polypeptide: Small ribosomal subunit protein uS8 (130 aa).

The protein belongs to the universal ribosomal protein uS8 family. In terms of assembly, part of the 30S ribosomal subunit. Contacts proteins S5 and S12.

Its function is as follows. One of the primary rRNA binding proteins, it binds directly to 16S rRNA central domain where it helps coordinate assembly of the platform of the 30S subunit. The polypeptide is Small ribosomal subunit protein uS8 (Shewanella piezotolerans (strain WP3 / JCM 13877)).